A 157-amino-acid polypeptide reads, in one-letter code: Ribosome maturation factor RimP (157 aa).

It belongs to the RimP family.

The protein localises to the cytoplasm. Required for maturation of 30S ribosomal subunits. The polypeptide is Ribosome maturation factor RimP (Helicobacter hepaticus (strain ATCC 51449 / 3B1)).